The chain runs to 449 residues: MMLSTEGREGFVVKVRGLPWSCSAEEVMRFFSDCKIQNGTSGVRFIYTREGRPSGEAFVELESEDEVKLALKKDRETMGHRYVEVFKSNSVEMDWVLKHTGPNSPDTANDGFVRLRGLPFGCSKEEIVQFFSGLEIVPNGMTLPVDFQGRSTGEAFVQFASQEIAEKALKKHKERIGHRYIEIFKSSRAEVRTHYDPPRKLMTMQRPGPYDRPGAGRGYNSIGRGAGFERMRRGAYGGGYGGYDDYGGYNDGYGFGSDRFGRDLNYCFSGMSDHRYGDGGSSFQSTTGHCVHMRGLPYRATENDIYNFFSPLNPMRVHIEIGPDGRVTGEADVEFATHEDAVAAMAKDKANMQHRYVELFLNSTAGTSGGAYDHSYVELFLNSTAGASGGAYGSQMMGGMGLSNQSSYGGPASQQLSGGYGGGYGGQSSMSGYDQVLQENSSDYQSNLA.

M1 carries the post-translational modification N-acetylmethionine. At M2 the chain carries N-acetylmethionine; in Heterogeneous nuclear ribonucleoprotein H2, N-terminally processed. The 80-residue stretch at 11-90 (FVVKVRGLPW…RYVEVFKSNS (80 aa)) folds into the RRM 1 domain. Position 23 is a phosphoserine (S23). K35 participates in a covalent cross-link: Glycyl lysine isopeptide (Lys-Gly) (interchain with G-Cter in SUMO2). S54 and S63 each carry phosphoserine. A Glycyl lysine isopeptide (Lys-Gly) (interchain with G-Cter in SUMO2) cross-link involves residue K87. S90 bears the Phosphoserine mark. K98 participates in a covalent cross-link: Glycyl lysine isopeptide (Lys-Gly) (interchain with G-Cter in SUMO2). In terms of domain architecture, RRM 2 spans 111 to 188 (GFVRLRGLPF…RYIEIFKSSR (78 aa)). Residue R233 is modified to Dimethylated arginine; alternate. Residue R233 is modified to Omega-N-methylarginine; alternate. One copy of the 1-1 repeat lies at 234–249 (GAYGGGYGGYDDYGGY). Residues 234-433 (GAYGGGYGGY…YGGQSSMSGY (200 aa)) are 2 X 16 AA Gly-rich approximate repeats. Y246 is subject to Phosphotyrosine. Residues 289-364 (HCVHMRGLPY…RYVELFLNST (76 aa)) form the RRM 3 domain. Phosphoserine is present on S310. 3 consecutive repeat copies span residues 354–372 (HRYVELFLNSTAGTSGGAY), 374–392 (HSYVELFLNSTAGASGGAY), and 418–433 (GGYGGGYGGQSSMSGY). Residues 354-392 (HRYVELFLNSTAGTSGGAYDHSYVELFLNSTAGASGGAY) are 2 X 19 AA perfect repeats.

Component of a ribonucleoprotein complex containing mRNAs and RNA-binding proteins including DDX5, HNRNPH2 and SRSF1 as well as splicing regulator ARVCF. Interacts with TXNL4/DIM1.

The protein resides in the nucleus. Its subcellular location is the nucleoplasm. Functionally, this protein is a component of the heterogeneous nuclear ribonucleoprotein (hnRNP) complexes which provide the substrate for the processing events that pre-mRNAs undergo before becoming functional, translatable mRNAs in the cytoplasm. Binds poly(RG). In Mus musculus (Mouse), this protein is Heterogeneous nuclear ribonucleoprotein H2 (Hnrnph2).